A 142-amino-acid polypeptide reads, in one-letter code: ATP synthase epsilon chain (142 aa).

Belongs to the ATPase epsilon chain family. F-type ATPases have 2 components, CF(1) - the catalytic core - and CF(0) - the membrane proton channel. CF(1) has five subunits: alpha(3), beta(3), gamma(1), delta(1), epsilon(1). CF(0) has three main subunits: a, b and c.

The protein localises to the cell inner membrane. Its function is as follows. Produces ATP from ADP in the presence of a proton gradient across the membrane. This chain is ATP synthase epsilon chain, found in Mannheimia succiniciproducens (strain KCTC 0769BP / MBEL55E).